Reading from the N-terminus, the 250-residue chain is Uracil-DNA glycosylase (250 aa).

The active-site Proton acceptor is the Asp78. Residues 228–250 (RGQKPVDWSGEQNNASRQGEFAL) form a disordered region.

The protein belongs to the uracil-DNA glycosylase (UDG) superfamily. UNG family.

The protein localises to the cytoplasm. It catalyses the reaction Hydrolyzes single-stranded DNA or mismatched double-stranded DNA and polynucleotides, releasing free uracil.. Functionally, excises uracil residues from the DNA which can arise as a result of misincorporation of dUMP residues by DNA polymerase or due to deamination of cytosine. In Bordetella parapertussis (strain 12822 / ATCC BAA-587 / NCTC 13253), this protein is Uracil-DNA glycosylase.